Here is a 154-residue protein sequence, read N- to C-terminus: 6,7-dimethyl-8-ribityllumazine synthase (154 aa).

5-amino-6-(D-ribitylamino)uracil is bound by residues Phe22, 56 to 58 (AFE), and 80 to 82 (AVI). 85–86 (AT) contacts (2S)-2-hydroxy-3-oxobutyl phosphate. His88 (proton donor) is an active-site residue. Phe113 contacts 5-amino-6-(D-ribitylamino)uracil. Arg127 is a (2S)-2-hydroxy-3-oxobutyl phosphate binding site.

The protein belongs to the DMRL synthase family.

The enzyme catalyses (2S)-2-hydroxy-3-oxobutyl phosphate + 5-amino-6-(D-ribitylamino)uracil = 6,7-dimethyl-8-(1-D-ribityl)lumazine + phosphate + 2 H2O + H(+). The protein operates within cofactor biosynthesis; riboflavin biosynthesis; riboflavin from 2-hydroxy-3-oxobutyl phosphate and 5-amino-6-(D-ribitylamino)uracil: step 1/2. Functionally, catalyzes the formation of 6,7-dimethyl-8-ribityllumazine by condensation of 5-amino-6-(D-ribitylamino)uracil with 3,4-dihydroxy-2-butanone 4-phosphate. This is the penultimate step in the biosynthesis of riboflavin. This is 6,7-dimethyl-8-ribityllumazine synthase from Syntrophobacter fumaroxidans (strain DSM 10017 / MPOB).